The primary structure comprises 212 residues: MTTAARLGIGGPVGSGKTALLECIVPLLTNQGIEVAIVTNDLLTTEDAERLKSGGILPRDRIIGVETGSCPHTAIREDPTMNILAVQDLEQLFPNLNLIMIESGGDNLASTFSYDLVDAYIFVIDVGAGDDIPRKKGPGFMQADLVVINKIDLAPYVNANLNLIRKEASVYRQSKPIAYTNCKTGVGLNEVVNFILERVLFRTALSVKNLEK.

GTP is bound at residue 11-18 (GPVGSGKT).

Belongs to the SIMIBI class G3E GTPase family. UreG subfamily. In terms of assembly, homodimer. UreD, UreF and UreG form a complex that acts as a GTP-hydrolysis-dependent molecular chaperone, activating the urease apoprotein by helping to assemble the nickel containing metallocenter of UreC. The UreE protein probably delivers the nickel.

Its subcellular location is the cytoplasm. In terms of biological role, facilitates the functional incorporation of the urease nickel metallocenter. This process requires GTP hydrolysis, probably effectuated by UreG. This Trichodesmium erythraeum (strain IMS101) protein is Urease accessory protein UreG.